The primary structure comprises 76 residues: ATP synthase peripheral stalk subunit F6, mitochondrial (76 aa).

An N6-acetyllysine mark is found at lysine 9, lysine 14, and lysine 47. 2 positions are modified to N6-acetyllysine; alternate: lysine 52 and lysine 67. N6-succinyllysine; alternate is present on residues lysine 52 and lysine 67. At lysine 73 the chain carries N6-acetyllysine. Serine 76 carries the phosphoserine modification.

Belongs to the eukaryotic ATPase subunit F6 family. Component of the ATP synthase complex composed at least of ATP5F1A/subunit alpha, ATP5F1B/subunit beta, ATP5MC1/subunit c (homooctomer), MT-ATP6/subunit a, MT-ATP8/subunit 8, ATP5ME/subunit e, ATP5MF/subunit f, ATP5MG/subunit g, ATP5MK/subunit k, ATP5MJ/subunit j, ATP5F1C/subunit gamma, ATP5F1D/subunit delta, ATP5F1E/subunit epsilon, ATP5PF/subunit F6, ATP5PB/subunit b, ATP5PD/subunit d, ATP5PO/subunit OSCP. ATP synthase complex consists of a soluble F(1) head domain (subunits alpha(3) and beta(3)) - the catalytic core - and a membrane F(0) domain - the membrane proton channel (subunits c, a, 8, e, f, g, k and j). These two domains are linked by a central stalk (subunits gamma, delta, and epsilon) rotating inside the F1 region and a stationary peripheral stalk (subunits F6, b, d, and OSCP).

Its subcellular location is the mitochondrion. It is found in the mitochondrion inner membrane. In terms of biological role, subunit F6, of the mitochondrial membrane ATP synthase complex (F(1)F(0) ATP synthase or Complex V) that produces ATP from ADP in the presence of a proton gradient across the membrane which is generated by electron transport complexes of the respiratory chain. ATP synthase complex consist of a soluble F(1) head domain - the catalytic core - and a membrane F(1) domain - the membrane proton channel. These two domains are linked by a central stalk rotating inside the F(1) region and a stationary peripheral stalk. During catalysis, ATP synthesis in the catalytic domain of F(1) is coupled via a rotary mechanism of the central stalk subunits to proton translocation. In vivo, can only synthesize ATP although its ATP hydrolase activity can be activated artificially in vitro. Part of the complex F(0) domain. Part of the complex F(0) domain and the peripheric stalk, which acts as a stator to hold the catalytic alpha(3)beta(3) subcomplex and subunit a/ATP6 static relative to the rotary elements. The protein is ATP synthase peripheral stalk subunit F6, mitochondrial of Sus scrofa (Pig).